The primary structure comprises 802 residues: Oleate activated transcription factor 3 (802 aa).

Residues 19–47 (CTNCKKRKSKCDRGKPCSNCTRIGIENSC) constitute a DNA-binding region (zn(2)-C6 fungal-type). A compositionally biased stretch (polar residues) spans 749-768 (TSQQDSLASAGTNRTNNIAT). Residues 749-779 (TSQQDSLASAGTNRTNNIATNSGSGDDGGNG) form a disordered region.

This sequence belongs to the OAF3 family.

It is found in the cytoplasm. Its subcellular location is the nucleus. The protein localises to the mitochondrion. In terms of biological role, transcriptional inhibitor with a significantly increased number of target genes in response to oleate. The polypeptide is Oleate activated transcription factor 3 (OAF3) (Vanderwaltozyma polyspora (strain ATCC 22028 / DSM 70294 / BCRC 21397 / CBS 2163 / NBRC 10782 / NRRL Y-8283 / UCD 57-17) (Kluyveromyces polysporus)).